The sequence spans 424 residues: Histidine--tRNA ligase (424 aa).

It belongs to the class-II aminoacyl-tRNA synthetase family. As to quaternary structure, homodimer.

The protein localises to the cytoplasm. The catalysed reaction is tRNA(His) + L-histidine + ATP = L-histidyl-tRNA(His) + AMP + diphosphate + H(+). This chain is Histidine--tRNA ligase, found in Shewanella piezotolerans (strain WP3 / JCM 13877).